The primary structure comprises 853 residues: ATP-dependent zinc metalloprotease FtsH (853 aa).

Residues 1-5 (MKNKK) are Cytoplasmic-facing. A helical transmembrane segment spans residues 6–26 (YLQFGGIAAVILIVLFLVSLF). The Extracellular segment spans residues 27 to 113 (SSDTRNFQEV…SYTTNVTQES (87 aa)). A helical membrane pass occupies residues 114–134 (FLMSMLSFILPMVIIFGLLMF). Residues 135 to 853 (FLTRMQGGGM…NPENEGDNRG (719 aa)) are Cytoplasmic-facing. An ATP-binding site is contributed by 205 to 212 (GPPGTGKT). Position 427 (His-427) interacts with Zn(2+). Glu-428 is an active-site residue. Zn(2+) is bound by residues His-431 and Asp-503. 2 stretches are compositionally biased toward basic and acidic residues: residues 619 to 632 (ESTR…REPV) and 639 to 648 (ALERGEEPPK). The tract at residues 619–853 (ESTRFPRQEN…NPENEGDNRG (235 aa)) is disordered. A compositionally biased stretch (low complexity) spans 677–695 (PASSAGVAPAAGAAAGSYG). Composition is skewed to polar residues over residues 728 to 739 (TPAQAPEQSPDS) and 770 to 788 (MDQS…QESP). Residues 796 to 813 (LPDHERSDYPEKAQKESV) are compositionally biased toward basic and acidic residues.

This sequence in the central section; belongs to the AAA ATPase family. The protein in the C-terminal section; belongs to the peptidase M41 family. Homohexamer. It depends on Zn(2+) as a cofactor.

It localises to the cell membrane. Acts as a processive, ATP-dependent zinc metallopeptidase for both cytoplasmic and membrane proteins. Plays a role in the quality control of integral membrane proteins. The chain is ATP-dependent zinc metalloprotease FtsH from Corynebacterium glutamicum (strain ATCC 13032 / DSM 20300 / JCM 1318 / BCRC 11384 / CCUG 27702 / LMG 3730 / NBRC 12168 / NCIMB 10025 / NRRL B-2784 / 534).